The primary structure comprises 244 residues: 1-(5-phosphoribosyl)-5-[(5-phosphoribosylamino)methylideneamino] imidazole-4-carboxamide isomerase (244 aa).

D8 serves as the catalytic Proton acceptor. The Proton donor role is filled by D130.

It belongs to the HisA/HisF family.

The protein localises to the cytoplasm. It catalyses the reaction 1-(5-phospho-beta-D-ribosyl)-5-[(5-phospho-beta-D-ribosylamino)methylideneamino]imidazole-4-carboxamide = 5-[(5-phospho-1-deoxy-D-ribulos-1-ylimino)methylamino]-1-(5-phospho-beta-D-ribosyl)imidazole-4-carboxamide. Its pathway is amino-acid biosynthesis; L-histidine biosynthesis; L-histidine from 5-phospho-alpha-D-ribose 1-diphosphate: step 4/9. This chain is 1-(5-phosphoribosyl)-5-[(5-phosphoribosylamino)methylideneamino] imidazole-4-carboxamide isomerase, found in Syntrophomonas wolfei subsp. wolfei (strain DSM 2245B / Goettingen).